The following is a 607-amino-acid chain: BTB/POZ domain-containing protein DOT3 (607 aa).

One can recognise a BTB domain in the interval 52 to 121; that stretch reads TDLSIQVNDI…CYNLPLDLNP (70 aa). The NPH3 domain maps to 211 to 487; sequence RCLYNDIATL…VQINTQVLFS (277 aa). Y428 is subject to Phosphotyrosine. Disordered regions lie at residues 498-520 and 573-607; these read DKLPEKEEENSGGREDKRMSRDN and KSFQTKREDEETRERTRRRSSTGQRTSFRRRMSMS. Basic and acidic residues-rich tracts occupy residues 499-520 and 577-586; these read KLPEKEEENSGGREDKRMSRDN and TKREDEETRE. Residues 511–563 are a coiled coil; the sequence is REDKRMSRDNEIIKTLKEELENVKKKMSELQSDYNELQQEYERLSSKQKSSHN.

Belongs to the NPH3 family. Expressed in emerging leaf primordia.

Its pathway is protein modification; protein ubiquitination. May act as a substrate-specific adapter of an E3 ubiquitin-protein ligase complex (CUL3-RBX1-BTB) which mediates the ubiquitination and subsequent proteasomal degradation of target proteins. Involved in leaf vasculature patterning. The protein is BTB/POZ domain-containing protein DOT3 of Arabidopsis thaliana (Mouse-ear cress).